The sequence spans 489 residues: MQSVETDRTTFTDLAADAHPAARVPVEVRVDVDDPFLAYRRARDETGGVYLATTGGQSGWGYFGTAPADFREVDPRAGGTLAALTEFLDGERLVRGDCDVPYPCGAVGWLSYDVARELESLPDSADADRALPNLQVARYDRFAAWEEPRGESVTLRVTACPRVDDFETPELAYEFGKQHALDLARAAAQGDPSVEDPPVETDEATFESDCTRESFADRVQTVKQYIRDGDTFQANVSQRLRAPAAVHPVEAFDALRTVNPAPYSALLEFPGVDLVSASPELLLHRDGDRIETEPIAGTRPRGETPDADDRLETDLLDDEKERAEHAMLVDLERNDLGKVSKFGSVEVSDYRRVDRYSEVMHLVSVVEGRLRDGASLQDAIAAVFPGGTITGAPKPRTMEIIDEVEATRRGPYTGSIGLFGFDGRATLNIVIRTLVRYAEEYHLRVGAGVVHDSDPDREYQETLDKGRALVNAVDEALGRRVDLAMEDQQ.

Position 262-264 (262-264 (PYS)) interacts with L-tryptophan. Residues 288–309 (DRIETEPIAGTRPRGETPDADD) form a disordered region. A chorismate-binding site is contributed by 297–298 (GT). A compositionally biased stretch (basic and acidic residues) spans 300-309 (PRGETPDADD). Glutamate 324 contributes to the Mg(2+) binding site. Chorismate is bound by residues tyrosine 412, arginine 432, 446–448 (GAG), and glycine 448. Glutamate 461 is a Mg(2+) binding site.

This sequence belongs to the anthranilate synthase component I family. Tetramer of two components I and two components II. Requires Mg(2+) as cofactor.

The catalysed reaction is chorismate + L-glutamine = anthranilate + pyruvate + L-glutamate + H(+). It participates in amino-acid biosynthesis; L-tryptophan biosynthesis; L-tryptophan from chorismate: step 1/5. This is Anthranilate synthase component 1 1 (trpE1) from Haloarcula marismortui (strain ATCC 43049 / DSM 3752 / JCM 8966 / VKM B-1809) (Halobacterium marismortui).